The primary structure comprises 263 residues: ATP synthase subunit a (263 aa).

Residues 1–14 (MYLNNNNNMKYYIN) constitute a propeptide, removed in mature form. The next 6 membrane-spanning stretches (helical) occupy residues 35-57 (FSFINITNFGLYTMITLLVILTM), 95-117 (VWGYYFPLVYTFFITIFTMNLIS), 129-151 (VVFVVSMSMIIWLGTTIIGFYTH), 156-178 (FGLFLPTGTPLILVPLLVSIELL), 191-213 (LSANIMAGHLLIVILGGLLFNLM), and 228-250 (IAILGIVCLEFAITIIQAYVWCI).

It belongs to the ATPase A chain family. As to quaternary structure, F-type ATPases have 2 components, CF(1) - the catalytic core - and CF(0) - the membrane proton channel. In yeast, the dimeric form of ATP synthase consists of 18 polypeptides: alpha, beta, gamma, delta, epsilon, 4 (B), 5 (OSCP), 6 (A), 8, 9 (C), d, E (Tim11), f, g, h, i, j and k.

It is found in the mitochondrion inner membrane. In terms of biological role, mitochondrial membrane ATP synthase (F(1)F(0) ATP synthase or Complex V) produces ATP from ADP in the presence of a proton gradient across the membrane which is generated by electron transport complexes of the respiratory chain. F-type ATPases consist of two structural domains, F(1) - containing the extramembraneous catalytic core and F(0) - containing the membrane proton channel, linked together by a central stalk and a peripheral stalk. During catalysis, ATP synthesis in the catalytic domain of F(1) is coupled via a rotary mechanism of the central stalk subunits to proton translocation. Key component of the proton channel; it may play a direct role in the translocation of protons across the membrane. The chain is ATP synthase subunit a (ATP6) from Eremothecium gossypii (strain ATCC 10895 / CBS 109.51 / FGSC 9923 / NRRL Y-1056) (Yeast).